Consider the following 263-residue polypeptide: R-spondin-1 (263 aa).

The first 20 residues, 1–20, serve as a signal peptide directing secretion; the sequence is MRLGLCVVALVLSWTHLTIS. FU repeat units follow at residues 34 to 85 and 91 to 135; these read AEGS…GYFD and MNKC…GSSA. Disulfide bonds link Cys-40–Cys-47, Cys-44–Cys-53, Cys-56–Cys-75, Cys-79–Cys-94, Cys-97–Cys-105, Cys-102–Cys-111, Cys-114–Cys-125, Cys-129–Cys-142, Cys-148–Cys-190, Cys-159–Cys-166, and Cys-199–Cys-206. A glycan (N-linked (GlcNAc...) asparagine) is linked at Asn-137. In terms of domain architecture, TSP type-1 spans 147–207; the sequence is QCEMSEWSPW…RCTVRRVPCP (61 aa). 2 C-linked (Man) tryptophan glycosylation sites follow: Trp-153 and Trp-156. Residues 206–263 form a disordered region; the sequence is CPEGQKRRKGGQGRRENANRNLARKESKEAGAGSRRRKGQQQQQQQGTVGPLTSAGPA. Over residues 218–234 the composition is skewed to basic and acidic residues; sequence GRRENANRNLARKESKE.

This sequence belongs to the R-spondin family. Interacts with the extracellular domain of FZD8 and LRP6. It however does not form a ternary complex with FZD8 and LRP6. Interacts with WNT1. Binds heparin. Interacts with ZNRF3; promoting indirect interaction between ZNRF3 and LGR4 and membrane clearance of ZNRF3. Interacts with LGR4, LGR5 and LGR6. Identified in a complex composed of RNF43, LGR5 and RSPO1. Interacts (via FU repeats) with KREM1. C-, and N-glycosylated. N-glycosylation at Asn-137, negatively influences its secretion and enhancing effect on Wnt/beta-catenin signaling. C-mannosylation at Trp-156 by DPY19L3 is required for its secretion and regulates the enhancing activity of Wnt signaling. As to expression, abundantly expressed in adrenal glands, ovary, testis, thyroid and trachea but not in bone marrow, spinal cord, stomach, leukocytes colon, small intestine, prostate, thymus and spleen.

Its subcellular location is the secreted. The protein resides in the nucleus. Functionally, activator of the canonical Wnt signaling pathway by acting as a ligand for LGR4-6 receptors. Upon binding to LGR4-6 (LGR4, LGR5 or LGR6), LGR4-6 associate with phosphorylated LRP6 and frizzled receptors that are activated by extracellular Wnt receptors, triggering the canonical Wnt signaling pathway to increase expression of target genes. Also regulates the canonical Wnt/beta-catenin-dependent pathway and non-canonical Wnt signaling by acting as an inhibitor of ZNRF3, an important regulator of the Wnt signaling pathway. Acts as a ligand for frizzled FZD8 and LRP6. May negatively regulate the TGF-beta pathway. Has a essential roles in ovary determination. Regulates Wnt signaling by antagonizing DKK1/KREM1-mediated internalization of LRP6 through an interaction with KREM1. The chain is R-spondin-1 (RSPO1) from Homo sapiens (Human).